The sequence spans 230 residues: CRP-like protein Clp (230 aa).

18–139 (PSLTLDAGTI…APRILYAIGV (122 aa)) serves as a coordination point for a nucleoside 3',5'-cyclic phosphate. One can recognise an HTH crp-type domain in the interval 158 to 230 (LDVTDRIVRT…GKTVVLYGTR (73 aa)). A DNA-binding region (H-T-H motif) is located at residues 190–209 (RQELARLVGCSREMAGRVLK).

Homodimer.

It localises to the cytoplasm. Its activity is regulated as follows. Allosterically inhibited by cyclic di-GMP (c-di-GMP), which binds to Clp and abolishes its ability to bind its target gene promoter. Global transcriptional regulator that regulates virulence factors production by activating or repressing the expression of a large set of genes in diffusible signal factor (DSF) pathway. In Xanthomonas campestris pv. campestris (strain 8004), this protein is CRP-like protein Clp (clp).